The following is a 126-amino-acid chain: Desulfoferrodoxin (126 aa).

Fe cation-binding residues include Cys10, Cys13, Cys29, Cys30, His49, His69, His75, Cys116, and His119.

Belongs to the desulfoferrodoxin family. Homodimer. Fe(3+) is required as a cofactor. It depends on Cu(2+) as a cofactor.

It catalyses the reaction reduced [rubredoxin] + superoxide + 2 H(+) = oxidized [rubredoxin] + H2O2. In terms of biological role, catalyzes the one-electron reduction of superoxide anion radical to hydrogen peroxide at a nonheme ferrous iron center. Plays a fundamental role in case of oxidative stress via its superoxide detoxification activity. The protein is Desulfoferrodoxin (dfx) of Syntrophotalea carbinolica (strain DSM 2380 / NBRC 103641 / GraBd1) (Pelobacter carbinolicus).